Reading from the N-terminus, the 308-residue chain is Probable GTP 3',8-cyclase (308 aa).

Residues 4–224 (RFGRPLEDLR…QIRKKHFRPR (221 aa)) form the Radical SAM core domain. Arg13 serves as a coordination point for GTP. The [4Fe-4S] cluster site is built by Cys20, Cys24, and Cys27. Lys60 provides a ligand contact to GTP. Gly64 contributes to the S-adenosyl-L-methionine binding site. Thr90 provides a ligand contact to GTP. Ser114 is a binding site for S-adenosyl-L-methionine. Lys151 serves as a coordination point for GTP. Cys245 and Cys248 together coordinate [4Fe-4S] cluster. 250–252 (RIR) is a GTP binding site. A [4Fe-4S] cluster-binding site is contributed by Cys262.

The protein belongs to the radical SAM superfamily. MoaA family. Requires [4Fe-4S] cluster as cofactor.

The enzyme catalyses GTP + AH2 + S-adenosyl-L-methionine = (8S)-3',8-cyclo-7,8-dihydroguanosine 5'-triphosphate + 5'-deoxyadenosine + L-methionine + A + H(+). Its pathway is cofactor biosynthesis; molybdopterin biosynthesis. In terms of biological role, catalyzes the cyclization of GTP to (8S)-3',8-cyclo-7,8-dihydroguanosine 5'-triphosphate. In Saccharolobus islandicus (strain L.S.2.15 / Lassen #1) (Sulfolobus islandicus), this protein is Probable GTP 3',8-cyclase.